The primary structure comprises 265 residues: tRNA pseudouridine synthase A (265 aa).

The active-site Nucleophile is the Asp-58. Tyr-116 lines the substrate pocket.

It belongs to the tRNA pseudouridine synthase TruA family. In terms of assembly, homodimer.

The catalysed reaction is uridine(38/39/40) in tRNA = pseudouridine(38/39/40) in tRNA. In terms of biological role, formation of pseudouridine at positions 38, 39 and 40 in the anticodon stem and loop of transfer RNAs. The protein is tRNA pseudouridine synthase A of Neisseria meningitidis serogroup C (strain 053442).